We begin with the raw amino-acid sequence, 218 residues long: Protein N-lysine methyltransferase METTL21A (218 aa).

Residues Trp-47, 73–75 (GAG), Asp-94, Trp-125, and Ala-143 contribute to the S-adenosyl-L-methionine site.

The protein belongs to the methyltransferase superfamily. METTL21 family. In terms of assembly, interacts with heat shock 70 family members; at least some of these proteins are methylation substrates.

Its subcellular location is the cytoplasm. The enzyme catalyses L-lysyl-[protein] + 3 S-adenosyl-L-methionine = N(6),N(6),N(6)-trimethyl-L-lysyl-[protein] + 3 S-adenosyl-L-homocysteine + 3 H(+). In terms of biological role, protein-lysine methyltransferase that selectively trimethylates residues in heat shock protein 70 (HSP70) family members. Contributes to the in vivo trimethylation of Lys residues in HSPA1 and HSPA8. In vitro methylates 'Lys-561' in HSPA1, 'Lys-564' in HSPA2, 'Lys-585' in HSPA5, 'Lys-563' in HSPA6 and 'Lys-561' in HSPA8. The polypeptide is Protein N-lysine methyltransferase METTL21A (Mettl21A) (Mus musculus (Mouse)).